We begin with the raw amino-acid sequence, 170 residues long: MIDLGISKLALIGAVALIVIGPERLPKVARTVGALVGRAQRYINDVKAEVSREVELEELRKMRTEFEDAARDVERTIHKEVNEQTQALNEALGGAEGTSGGGSADAGGGFVPSWDAAHKAHNGRKSWRVKQGARPLWFKRQHNVRVWVQSGAARVKRHRPVTRPSRSFFE.

A helical membrane pass occupies residues 1–21 (MIDLGISKLALIGAVALIVIG).

The protein belongs to the TatB family. As to quaternary structure, the Tat system comprises two distinct complexes: a TatABC complex, containing multiple copies of TatA, TatB and TatC subunits, and a separate TatA complex, containing only TatA subunits. Substrates initially bind to the TatABC complex, which probably triggers association of the separate TatA complex to form the active translocon.

It is found in the cell inner membrane. In terms of biological role, part of the twin-arginine translocation (Tat) system that transports large folded proteins containing a characteristic twin-arginine motif in their signal peptide across membranes. Together with TatC, TatB is part of a receptor directly interacting with Tat signal peptides. TatB may form an oligomeric binding site that transiently accommodates folded Tat precursor proteins before their translocation. In Cupriavidus necator (strain ATCC 17699 / DSM 428 / KCTC 22496 / NCIMB 10442 / H16 / Stanier 337) (Ralstonia eutropha), this protein is Sec-independent protein translocase protein TatB.